A 419-amino-acid chain; its full sequence is Probable pectate lyase C (419 aa).

The N-terminal stretch at 1–19 (MRLGIALFSLIGLCHSVSA) is a signal peptide. 3 N-linked (GlcNAc...) asparagine glycosylation sites follow: N48, N164, and N201. R204 is an active-site residue. Positions 261–296 (NEYFHGYVETNYYDPDRDGTLNGNELGVSASNYGGM) constitute an EF-hand domain. Residues D274, D276, D278, T280, and E285 each coordinate Ca(2+). Residues 350–395 (ELISDEASMGGPGDLDGGSPPTDSDGDGIPDDAETEIGSDPNTADS) form a disordered region. A compositionally biased stretch (acidic residues) spans 373-386 (SDGDGIPDDAETEI).

It belongs to the polysaccharide lyase 1 family. Ca(2+) serves as cofactor.

It is found in the secreted. It catalyses the reaction Eliminative cleavage of (1-&gt;4)-alpha-D-galacturonan to give oligosaccharides with 4-deoxy-alpha-D-galact-4-enuronosyl groups at their non-reducing ends.. In terms of biological role, pectinolytic enzyme consist of four classes of enzymes: pectin lyase, polygalacturonase, pectin methylesterase and rhamnogalacturonase. Among pectinolytic enzymes, pectin lyase is the most important in depolymerization of pectin, since it cleaves internal glycosidic bonds of highly methylated pectins. Favors pectate, the anion, over pectin, the methyl ester. The protein is Probable pectate lyase C (plyC) of Aspergillus terreus (strain NIH 2624 / FGSC A1156).